The following is a 411-amino-acid chain: Arginine deiminase (411 aa).

C401 functions as the Amidino-cysteine intermediate in the catalytic mechanism.

Belongs to the arginine deiminase family.

It is found in the cytoplasm. It carries out the reaction L-arginine + H2O = L-citrulline + NH4(+). It participates in amino-acid degradation; L-arginine degradation via ADI pathway; carbamoyl phosphate from L-arginine: step 1/2. The protein is Arginine deiminase of Streptococcus equi subsp. zooepidemicus (strain H70).